The following is a 524-amino-acid chain: Glycoprotein (524 aa).

An N-terminal signal peptide occupies residues 1 to 19 (MVPQALLFVPLLVFPLCFG). Over 20-459 (KFPIYTIPDK…DLGLPNWGKY (440 aa)) the chain is Virion surface. Intrachain disulfides connect C43–C302, C54–C226, C80–C113, C178–C188, C208–C247, and C242–C271. Residue N56 is glycosylated (N-linked (GlcNAc...) asparagine; by host). N-linked (GlcNAc...) asparagine; by host glycans are attached at residues N266 and N338. C363 and C370 are disulfide-bonded. Residues 460–480 (VLLSAGALTALMLIIFLMTCW) traverse the membrane as a helical segment. A lipid anchor (S-palmitoyl cysteine; by host) is attached at C479. Over 481-524 (RRVNRSEPTQHNLRGTGREVSVTPQSGKIISSWESYKSGGETGL) the chain is Intravirion.

The protein belongs to the lyssavirus glycoprotein family. As to quaternary structure, homotrimer. Interacts with matrix protein. Interacts with host TRFC. Interacts with host BST2; this interaction inhibits viral budding by tethering new virions to the cell surface. Interacts with host ITGB1. Interacts with host GRM2. Post-translationally, glycosylated and palmitoylated by host. Glycosylation is crucial for glycoprotein export at the cell surface.

The protein resides in the virion membrane. Attaches the virus to host cellular receptor, inducing endocytosis of the virion by using different host proteins including TFRC, GRM2 and ITGB1. In the endosome, the acidic pH induces conformational changes in the glycoprotein trimer, which trigger fusion between virus and cell membrane. There is convincing in vitro evidence that the muscular form of the nicotinic acetylcholine receptor (nAChR), the neuronal cell adhesion molecule (NCAM), and the p75 neurotrophin receptor (p75NTR) bind glycoprotein and thereby facilitate rabies virus entry into cells. This is Glycoprotein (G) from Homo sapiens (Human).